We begin with the raw amino-acid sequence, 698 residues long: MFKLFTARQHDKIWDFDGGIHPPEMKLQSSTVPMRIAPLPDQLIIPLQQHLGPEGELRVRAGEQVLKGQPLTVGRGRTVPVHAPTSGMITAIAPHTTAHPSGLAELCVHITPDGEDRWREQQPWADYRQRDKMALLDRIHQAGIAGLGGAGFPTASKLQGGLNGIITLIINAAECEPYITADDRLMQEHADEVITGIHILRHLLQPQQVLIGIEDNKPEAIAALQRALRGQDDIHLRVVPTKYPSGGAKQLTKILTGKEVPFGKHSSSIGVLMQNVGTVVAIKRAVIDDEPLIERVVTLTGDALSSPGNFWARIGTPVLYLLKLAGFKPQNPPMVIMGGPLMGFTLPSLDVPIVKISNCILAPAETEMGLSEPEQSCIRCGLCVDACPAGLLPQQLYWFSRGEEHEKARNHNLFDCIECGACAYVCPSNIPLVQYYRQEKAEIRALDQESARAAEAKARFEAKQARLAREKLARELRHKQAAVKLTDADQQTVDAAVSRLTRQSDGSESVINIPAGQMPDNSAVIAAREARKAQARARQAEKQQARSTEETTDVVDPRQAAVAAAIARVKAKKAAQVQHVTTDVAEAGSEAIAEDPRKAAVAAAIARVKAKKAAQAQHVTTDVAEAGSEAMAEDPRKAAVAAAIARVKAKKAAQAQHVTTDVAEAGSEAIAEDPRKAAVAAAIARVKAKKAAQAINPD.

4Fe-4S ferredoxin-type domains lie at 366 to 397 and 407 to 436; these read TEMG…QQLY and KARN…VQYY. Residues Cys-377, Cys-380, Cys-383, Cys-387, Cys-416, Cys-419, Cys-422, and Cys-426 each coordinate [4Fe-4S] cluster.

This sequence belongs to the 4Fe4S bacterial-type ferredoxin family. RnfC subfamily. The complex is composed of six subunits: RnfA, RnfB, RnfC, RnfD, RnfE and RnfG. [4Fe-4S] cluster serves as cofactor.

It is found in the cell inner membrane. In terms of biological role, part of a membrane-bound complex that couples electron transfer with translocation of ions across the membrane. This chain is Ion-translocating oxidoreductase complex subunit C, found in Yersinia pseudotuberculosis serotype O:1b (strain IP 31758).